We begin with the raw amino-acid sequence, 635 residues long: Sodium- and chloride-dependent creatine transporter 1 (635 aa).

The segment at 1 to 27 (MAKKSAENGIYSVSGDEKKGPLIVSGP) is disordered. The Cytoplasmic segment spans residues 1-60 (MAKKSAENGIYSVSGDEKKGPLIVSGPDGAPAKGDGPAGLGAPGGRLAVPPRETWTRQMD). A helical membrane pass occupies residues 61–81 (FIMSCVGFAVGLGNVWRFPYL). Residues 82 to 87 (CYKNGG) lie on the Extracellular side of the membrane. Residues 88-108 (GVFLIPYVLIALVGGIPIFFL) form a helical membrane-spanning segment. Over 109 to 138 (EISLGQFMKAGSINVWNICPLFKGLGYASM) the chain is Cytoplasmic. A helical membrane pass occupies residues 139–159 (VIVFYCNTYYIMVLAWGFYYL). Residues 160-230 (VKSFTTTLPW…LSTGLEVPGA (71 aa)) are Extracellular-facing. N-linked (GlcNAc...) asparagine glycosylation is found at N192 and N197. The helical transmembrane segment at 231 to 251 (LNWEVTLCLLACWVLVYFCVW) threads the bilayer. The Cytoplasmic segment spans residues 252–269 (KGVKSTGKIVYFTATFPY). Residues 270-290 (VVLVVLLVRGVLLPGALDGII) traverse the membrane as a helical segment. The Extracellular segment spans residues 291–304 (YYLKPDWSKLGSPQ). The chain crosses the membrane as a helical span at residues 305 to 325 (VWIDAGTQIFFSYAIGLGALT). Residues 326–341 (ALGSYNRFNNNCYKDA) lie on the Cytoplasmic side of the membrane. A helical transmembrane segment spans residues 342-362 (IILALINSGTSFFAGFVVFSI). Over 363-394 (LGFMATEQGVHISKVAESGPGLAFIAYPRAVT) the chain is Extracellular. The chain crosses the membrane as a helical span at residues 395–415 (LMPVAPLWAALFFFMLLLLGL). Residues 416–444 (DSQFVGVEGFITGLLDLLPASYYFRFQRE) are Cytoplasmic-facing. The helical transmembrane segment at 445–465 (ISVALCCALCFVIDLSMVTDG) threads the bilayer. Topologically, residues 466–479 (GMYVFQLFDYYSAS) are extracellular. A helical transmembrane segment spans residues 480–500 (GTTLLWQAFWECVVVAWVYGA). Topologically, residues 501 to 520 (DRFMDDIACMIGYRPCPWMK) are cytoplasmic. A helical membrane pass occupies residues 521–541 (WCWSFFTPLVCMGIFIFNIVY). Residues 542–560 (YEPLVYNNTYVYPWWGEAM) are Extracellular-facing. The N-linked (GlcNAc...) asparagine glycan is linked to N548. A helical transmembrane segment spans residues 561 to 581 (GWAFALSSMLCVPLHLLGCLL). Over 582 to 635 (RAKGTMAERWQHLTQPIWGLHHLEYRAQDADVRGLTTLTPVSESSKVVVVESVM) the chain is Cytoplasmic. A phosphothreonine mark is found at T617 and T620. At S623 the chain carries Phosphoserine.

Belongs to the sodium:neurotransmitter symporter (SNF) (TC 2.A.22) family. SLC6A8 subfamily. Glycosylated. In terms of tissue distribution, brain. Highly expressed in brain capillaries branching in all cortical layers and moderately expressed in neuronal perikarya (at protein level).

It localises to the cell membrane. Its subcellular location is the apical cell membrane. The catalysed reaction is creatine(out) + chloride(out) + 2 Na(+)(out) = creatine(in) + chloride(in) + 2 Na(+)(in). Functionally, creatine:sodium symporter which mediates the uptake of creatine. Plays an important role in supplying creatine to the brain via the blood-brain barrier. This Mus musculus (Mouse) protein is Sodium- and chloride-dependent creatine transporter 1 (Slc6a8).